The primary structure comprises 438 residues: Xaa-Pro dipeptidase 2 (438 aa).

Mn(2+) contacts are provided by Asp242, Asp253, His333, Glu378, and Glu414.

Belongs to the peptidase M24B family. Bacterial-type prolidase subfamily. Mn(2+) serves as cofactor.

The enzyme catalyses Xaa-L-Pro dipeptide + H2O = an L-alpha-amino acid + L-proline. In terms of biological role, splits dipeptides with a prolyl residue in the C-terminal position. This Idiomarina loihiensis (strain ATCC BAA-735 / DSM 15497 / L2-TR) protein is Xaa-Pro dipeptidase 2.